Here is a 371-residue protein sequence, read N- to C-terminus: o-succinylbenzoate synthase (371 aa).

The active-site Proton donor is Lys-164. Residues Asp-189, Glu-214, and Asp-239 each coordinate Mg(2+). Lys-263 serves as the catalytic Proton acceptor.

The protein belongs to the mandelate racemase/muconate lactonizing enzyme family. MenC type 2 subfamily. Requires a divalent metal cation as cofactor.

The catalysed reaction is (1R,6R)-6-hydroxy-2-succinyl-cyclohexa-2,4-diene-1-carboxylate = 2-succinylbenzoate + H2O. Its pathway is quinol/quinone metabolism; 1,4-dihydroxy-2-naphthoate biosynthesis; 1,4-dihydroxy-2-naphthoate from chorismate: step 4/7. The protein operates within quinol/quinone metabolism; menaquinone biosynthesis. Converts 2-succinyl-6-hydroxy-2,4-cyclohexadiene-1-carboxylate (SHCHC) to 2-succinylbenzoate (OSB). Does not show detectable N-acylamino acid racemase (NAAAR) activity with N-acetyl-S-methionine as substrate. This chain is o-succinylbenzoate synthase, found in Bacillus subtilis (strain 168).